Reading from the N-terminus, the 106-residue chain is Cell division protein FtsB (106 aa).

Topologically, residues 1–3 are cytoplasmic; the sequence is MGK. A helical transmembrane segment spans residues 4–21; that stretch reads LTLLLLVLLGWLQYSLWL. Residues 22-106 lie on the Periplasmic side of the membrane; that stretch reads GKNGIHDFVR…GTPSTQNNAQ (85 aa). A coiled-coil region spans residues 31–62; that stretch reads RVKEDVAAQEANNSTLKARNDQLFAEIDDLNG.

Belongs to the FtsB family. As to quaternary structure, part of a complex composed of FtsB, FtsL and FtsQ.

It localises to the cell inner membrane. In terms of biological role, essential cell division protein. May link together the upstream cell division proteins, which are predominantly cytoplasmic, with the downstream cell division proteins, which are predominantly periplasmic. The polypeptide is Cell division protein FtsB (Yersinia pseudotuberculosis serotype O:1b (strain IP 31758)).